The sequence spans 183 residues: ATP synthase subunit delta, chloroplastic (183 aa).

It belongs to the ATPase delta chain family. F-type ATPases have 2 components, F(1) - the catalytic core - and F(0) - the membrane proton channel. F(1) has five subunits: alpha(3), beta(3), gamma(1), delta(1), epsilon(1). CF(0) has four main subunits: a(1), b(1), b'(1) and c(10-14). The alpha and beta chains form an alternating ring which encloses part of the gamma chain. F(1) is attached to F(0) by a central stalk formed by the gamma and epsilon chains, while a peripheral stalk is formed by the delta, b and b' chains.

The protein resides in the plastid. Its subcellular location is the chloroplast thylakoid membrane. Functionally, f(1)F(0) ATP synthase produces ATP from ADP in the presence of a proton or sodium gradient. F-type ATPases consist of two structural domains, F(1) containing the extramembraneous catalytic core and F(0) containing the membrane proton channel, linked together by a central stalk and a peripheral stalk. During catalysis, ATP synthesis in the catalytic domain of F(1) is coupled via a rotary mechanism of the central stalk subunits to proton translocation. This protein is part of the stalk that links CF(0) to CF(1). It either transmits conformational changes from CF(0) to CF(1) or is implicated in proton conduction. In Cyanidium caldarium (Red alga), this protein is ATP synthase subunit delta, chloroplastic.